The primary structure comprises 267 residues: D-aminoacyl-tRNA deacylase (267 aa).

Belongs to the DtdA deacylase family. As to quaternary structure, monomer. It depends on Zn(2+) as a cofactor.

The catalysed reaction is a D-aminoacyl-tRNA + H2O = a tRNA + a D-alpha-amino acid + H(+). It catalyses the reaction glycyl-tRNA(Ala) + H2O = tRNA(Ala) + glycine + H(+). In terms of biological role, D-aminoacyl-tRNA deacylase with broad substrate specificity. By recycling D-aminoacyl-tRNA to D-amino acids and free tRNA molecules, this enzyme counteracts the toxicity associated with the formation of D-aminoacyl-tRNA entities in vivo. This is D-aminoacyl-tRNA deacylase from Methanothrix thermoacetophila (strain DSM 6194 / JCM 14653 / NBRC 101360 / PT) (Methanosaeta thermophila).